A 69-amino-acid chain; its full sequence is uncharacterized protein (69 aa).

Residues 32–54 traverse the membrane as a helical segment; it reads MLGAIDVAVAVASVPTLFVVTAI.

It is found in the membrane. This is an uncharacterized protein from Sinorhizobium fredii (strain NBRC 101917 / NGR234).